A 597-amino-acid polypeptide reads, in one-letter code: Aspartate--tRNA ligase (597 aa).

E171 provides a ligand contact to L-aspartate. The segment at 195-198 (QLFK) is aspartate. R217 contributes to the L-aspartate binding site. Residues 217–219 (RDE) and Q226 each bind ATP. H448 contacts L-aspartate. E482 contacts ATP. R489 provides a ligand contact to L-aspartate. 534–537 (GLDR) provides a ligand contact to ATP.

The protein belongs to the class-II aminoacyl-tRNA synthetase family. Type 1 subfamily. In terms of assembly, homodimer.

The protein resides in the cytoplasm. It carries out the reaction tRNA(Asp) + L-aspartate + ATP = L-aspartyl-tRNA(Asp) + AMP + diphosphate. In terms of biological role, catalyzes the attachment of L-aspartate to tRNA(Asp) in a two-step reaction: L-aspartate is first activated by ATP to form Asp-AMP and then transferred to the acceptor end of tRNA(Asp). In Photobacterium profundum (strain SS9), this protein is Aspartate--tRNA ligase.